The chain runs to 438 residues: Na(+)/H(+) antiporter NhaA (438 aa).

A run of 11 helical transmembrane segments spans residues 23–43 (FGGI…NSFL), 62–82 (FFIG…LFFL), 104–124 (SFPV…YFFL), 133–153 (GFGI…MLLG), 162–182 (VFLI…IALF), 185–205 (TNLK…LALL), 221–241 (VLLW…AVVL), 302–322 (FLAP…NAGV), 337–357 (FGVI…ITFI), 372–392 (WWHI…SMFI), and 410–430 (IAIL…LFAL).

The protein belongs to the NhaA Na(+)/H(+) (TC 2.A.33) antiporter family.

It is found in the cell inner membrane. It carries out the reaction Na(+)(in) + 2 H(+)(out) = Na(+)(out) + 2 H(+)(in). In terms of biological role, na(+)/H(+) antiporter that extrudes sodium in exchange for external protons. This chain is Na(+)/H(+) antiporter NhaA, found in Helicobacter pylori (strain P12).